A 403-amino-acid polypeptide reads, in one-letter code: Phosphopentomutase (403 aa).

6 residues coordinate Mn(2+): Asp-13, Asp-298, His-303, Asp-339, His-340, and His-351.

It belongs to the phosphopentomutase family. Mn(2+) is required as a cofactor.

The protein localises to the cytoplasm. The catalysed reaction is 2-deoxy-alpha-D-ribose 1-phosphate = 2-deoxy-D-ribose 5-phosphate. The enzyme catalyses alpha-D-ribose 1-phosphate = D-ribose 5-phosphate. The protein operates within carbohydrate degradation; 2-deoxy-D-ribose 1-phosphate degradation; D-glyceraldehyde 3-phosphate and acetaldehyde from 2-deoxy-alpha-D-ribose 1-phosphate: step 1/2. Its function is as follows. Isomerase that catalyzes the conversion of deoxy-ribose 1-phosphate (dRib-1-P) and ribose 1-phosphate (Rib-1-P) to deoxy-ribose 5-phosphate (dRib-5-P) and ribose 5-phosphate (Rib-5-P), respectively. The sequence is that of Phosphopentomutase from Streptococcus thermophilus (strain CNRZ 1066).